The chain runs to 896 residues: MLSTLIKKMFGSRNERTLRRMEKSVMAINAFEPKMQALSNEELAGKTQEFKERFNNGESLDELLAEAFATVREVSLRTLGLRHFDVQLIGGMVLHEGNIAEMRTGEGKTLVATLPAYLNAISGRGVHIVTVNDYLAKRDSQWMKPIYEFLGLTVGVIYPDMSHKEKQEAYKADIVYGTNNEYGFDYLRDNMAFSLTDKVQRELNFAIVDEVDSILIDEARTPLIISGAAEDSSELYIKINSLIPQLKKQEEEGDEGDYTIDEKQKQAHLTDAGHLHIEELLTKAKLLDPGESLYHASNIMLMHHVNAALKAHAMFHRDIDYIVKDNQVVIVDEHTGRTMPGRRWSEGLHQAVEAKEGVPIQNENQTLASITFQNFFRMYNKLSGMTGTADTEAYEFQQIYNLEVVVIPTNRSMIRKDEADLVYLTQADKFQAIIEDVRECGVRKQPVLVGTVSIEASEFLSQLLKKENIKHQVLNAKFHEKEAQIIAEAGRPGAVTIATNMAGRGTDIVLGGSLAADLANLPADASEQEKEAVKKEWQKRHDEVIAAGGLRIIGSERHESRRIDNQLRGRAGRQGDPGSSRFYLSLEDNLMRIFASERVASMMRRLGMQPGEPIEHSLVTRAIENAQRKLEGHHFDVRKQLLDYDNVANDQRQVIYTQRASIMAMTDTQEVVEMMREEVMNSLVDTYIPPQSLEDQWDPQALSDVLSDEFKIKAPVPDWIDKDHSIQPDQIKEKVLALAIEHYDEKVRKVGRPVISQFEKSIILQTLDNHWREHLAAMDQLRQGIHLRGYAQKDPKQEYKKEAFSLFTMMLDNLKYEVIRILSSVEIQTEEDAQVVEEQRRADQIRKMNLMHESLSENDEASETQTFRRQEKKIGRNDPCPCGSGKKYKACHGSLV.

ATP is bound by residues Gln-87, 105–109 (GEGKT), and Asp-507. The disordered stretch occupies residues 853–879 (ESLSENDEASETQTFRRQEKKIGRNDP). The span at 866-876 (TFRRQEKKIGR) shows a compositional bias: basic and acidic residues. Residues Cys-880, Cys-882, Cys-891, and His-892 each contribute to the Zn(2+) site.

This sequence belongs to the SecA family. As to quaternary structure, monomer and homodimer. Part of the essential Sec protein translocation apparatus which comprises SecA, SecYEG and auxiliary proteins SecDF-YajC and YidC. Requires Zn(2+) as cofactor.

It is found in the cell inner membrane. The protein resides in the cytoplasm. The catalysed reaction is ATP + H2O + cellular proteinSide 1 = ADP + phosphate + cellular proteinSide 2.. Part of the Sec protein translocase complex. Interacts with the SecYEG preprotein conducting channel. Has a central role in coupling the hydrolysis of ATP to the transfer of proteins into and across the cell membrane, serving both as a receptor for the preprotein-SecB complex and as an ATP-driven molecular motor driving the stepwise translocation of polypeptide chains across the membrane. The sequence is that of Protein translocase subunit SecA from Legionella pneumophila (strain Corby).